Here is an 862-residue protein sequence, read N- to C-terminus: Eukaryotic translation initiation factor 3 subunit C (862 aa).

Residues M1–K81 are disordered. A compositionally biased stretch (acidic residues) spans S17–E54. Positions T55–A65 are enriched in basic and acidic residues. Residues S66–E75 show a composition bias toward acidic residues. Residues F600–E774 enclose the PCI domain. The interval R813–A862 is disordered. Residues G818 to A862 show a composition bias toward gly residues.

It belongs to the eIF-3 subunit C family. Component of the eukaryotic translation initiation factor 3 (eIF-3) complex.

It localises to the cytoplasm. Component of the eukaryotic translation initiation factor 3 (eIF-3) complex, which is involved in protein synthesis of a specialized repertoire of mRNAs and, together with other initiation factors, stimulates binding of mRNA and methionyl-tRNAi to the 40S ribosome. The eIF-3 complex specifically targets and initiates translation of a subset of mRNAs involved in cell proliferation. The sequence is that of Eukaryotic translation initiation factor 3 subunit C (nip1) from Aspergillus fumigatus (strain CBS 144.89 / FGSC A1163 / CEA10) (Neosartorya fumigata).